A 496-amino-acid polypeptide reads, in one-letter code: 4-O-methyl-glucuronoyl methylesterase 1 (496 aa).

Positions 1–19 are cleaved as a signal peptide; that stretch reads MKSTVASALLVLAGTAVQA. The CBM1 domain occupies 20-55; sequence QSGPWQQCGGIGWQGPFTCVSGHTCQVLNDWYHQCV. The interval 57–151 is disordered; that stretch reads GGGPSPPPTS…RLPDPFTFHN (95 aa). Residues 59 to 125 are compositionally biased toward pro residues; the sequence is GPSPPPTSPP…SPPPTSPPPS (67 aa). Cystine bridges form between C129-C163, C307-C443, and C339-C415. A GXSYXG catalytic site motif motif is present at residues 306-311; sequence GCSRNG. S308 acts as the Nucleophile in catalysis. Residues K312, Q354, E362, and W406 each contribute to the substrate site. H442 (proton donor/acceptor) is an active-site residue.

Belongs to the carbohydrate esterase 15 (CE15) family.

It localises to the secreted. It catalyses the reaction a 4-O-methyl-alpha-D-glucuronosyl ester derivative + H2O = 4-O-methyl-alpha-D-glucuronate derivative + an alcohol + H(+). In terms of biological role, glucuronoyl esterase which may play a significant role in biomass degradation, as it is considered to disconnect hemicellulose from lignin through the hydrolysis of the ester bond between 4-O-methyl-D-glucuronic acid residues of glucuronoxylans and aromatic alcohols of lignin. Cleaves native lignin-carbohydrate (LC) ester bonds from LC complex preparations of spruce (softwood) and birch (hardwood), containing mainly hemicelluloses with partially acetylated glucomannans in spruce and partially acetylated xylan in birch. Can hydrolyze benzyl glucuronic acid (BnGlcA), allyl glucuronic acid (allylGlcA) and to a lower degree methyl glucuronic acid (MeGlcA) in vitro. In Sodiomyces alcalophilus (Acremonium alcalophilum), this protein is 4-O-methyl-glucuronoyl methylesterase 1.